The following is a 243-amino-acid chain: MQSSKDAIYSQPQQVSDFRFDDTVAEVFPDMIQRSVPGYNTIVDAIGQLAGRYATNNSNIYDLGCSLGAVSLAAAKYVVADNCSIIAVDNSEAMAQRCARHVKAYKANTPIEVICDDLQNIHIENASSVVMNFTLQFIDPTQRDQIIQSIYDGLAPGGIFILSEKLRHASEQGNELLIDLHHEFKRRNGYSELEISQKRESIENILRAETFEAHQTRLQNAGFDDVVLWFQCFNFASIVAIKS.

S-adenosyl-L-methionine contacts are provided by residues Y39, G64–S66, D89–N90, D117–L118, N132, and R199.

The protein belongs to the class I-like SAM-binding methyltransferase superfamily. Cx-SAM synthase family. As to quaternary structure, homodimer.

It catalyses the reaction prephenate + S-adenosyl-L-methionine = carboxy-S-adenosyl-L-methionine + 3-phenylpyruvate + H2O. In terms of biological role, catalyzes the conversion of S-adenosyl-L-methionine (SAM) to carboxy-S-adenosyl-L-methionine (Cx-SAM). The sequence is that of Carboxy-S-adenosyl-L-methionine synthase from Pseudoalteromonas atlantica (strain T6c / ATCC BAA-1087).